Here is a 383-residue protein sequence, read N- to C-terminus: Mannan endo-1,4-beta-mannosidase (383 aa).

Residues 1–35 form the signal peptide; that stretch reads MRNARSTLITTAGMAFAVLGLLFALAGPSAGRAEA. Residues 339 to 377 enclose the CBM10 domain; sequence GGSTGGTAPNGYPYCVNGGASDPDGDGWGWENSRSCVVR.

The protein belongs to the glycosyl hydrolase 5 (cellulase A) family. Monomer.

It catalyses the reaction Random hydrolysis of (1-&gt;4)-beta-D-mannosidic linkages in mannans, galactomannans and glucomannans.. The sequence is that of Mannan endo-1,4-beta-mannosidase (manA) from Streptomyces lividans.